The chain runs to 382 residues: Proton extrusion protein PxcA (382 aa).

Helical transmembrane passes span 156 to 176 (TLIS…VQQI), 257 to 277 (AIKN…VCII), 305 to 325 (IILF…QVLL), and 340 to 360 (FILL…KYWI).

It belongs to the CemA family.

It is found in the cell inner membrane. Functionally, required for H(+) efflux immediately after light irradiation to form a rapid H(+) concentration gradient across the thylakoid membranes. Together with PxcL, contributes to transient H(+) uptake following dark to light transition. This Prochlorococcus marinus (strain MIT 9313) protein is Proton extrusion protein PxcA.